The primary structure comprises 128 residues: Keratin-associated protein 2-1 (128 aa).

Positions 5–112 are 10 X 5 AA repeats of C-C-[CDPQRWG]-[APRS]-[CIPSTVD]; the sequence is CCGSTFSSLS…SVQSPCCRPP (108 aa).

Belongs to the KRTAP type 2 family. As to quaternary structure, interacts with hair keratins.

In the hair cortex, hair keratin intermediate filaments are embedded in an interfilamentous matrix, consisting of hair keratin-associated proteins (KRTAP), which are essential for the formation of a rigid and resistant hair shaft through their extensive disulfide bond cross-linking with abundant cysteine residues of hair keratins. The matrix proteins include the high-sulfur and high-glycine-tyrosine keratins. The polypeptide is Keratin-associated protein 2-1 (KRTAP2-1) (Homo sapiens (Human)).